The primary structure comprises 203 residues: Kunitz trypsin inhibitor 6 (203 aa).

A signal peptide spans 1 to 21 (MKTFQLMMISFLFVAITTTSG). Residues Cys-70 and Cys-115 are joined by a disulfide bond. Residues Asn-94, Asn-127, Asn-136, Asn-144, and Asn-197 are each glycosylated (N-linked (GlcNAc...) asparagine).

The protein belongs to the protease inhibitor I3 (leguminous Kunitz-type inhibitor) family.

Its function is as follows. Exhibits Kunitz trypsin protease inhibitor activity. In Arabidopsis thaliana (Mouse-ear cress), this protein is Kunitz trypsin inhibitor 6.